The chain runs to 523 residues: Lysine--tRNA ligase (523 aa).

The 'HIGH' region motif lies at P30–N38. The Zn(2+) site is built by D95, C99, H100, H106, C177, H180, C199, and H203. Positions K279–S283 match the 'KMSKS' region motif.

Belongs to the class-I aminoacyl-tRNA synthetase family. Zn(2+) serves as cofactor.

Its subcellular location is the cytoplasm. The enzyme catalyses tRNA(Lys) + L-lysine + ATP = L-lysyl-tRNA(Lys) + AMP + diphosphate. This chain is Lysine--tRNA ligase (lysS), found in Pyrococcus furiosus (strain ATCC 43587 / DSM 3638 / JCM 8422 / Vc1).